A 607-amino-acid chain; its full sequence is Phosphoenolpyruvate carboxykinase [GTP] (607 aa).

Residues Arg-81 and 221–223 (YGG) each bind substrate. Positions 230 and 250 each coordinate Mn(2+). Residue Ser-272 coordinates substrate. GTP is bound at residue 273–278 (ACGKTN). Residue Cys-274 is part of the active site. A Mn(2+)-binding site is contributed by Asp-297. 388 to 390 (NSR) is a binding site for substrate. GTP contacts are provided by residues Arg-390, Arg-421, and 516 to 519 (FGDN).

It belongs to the phosphoenolpyruvate carboxykinase [GTP] family. In terms of assembly, monomer. Mn(2+) serves as cofactor.

It localises to the cytoplasm. It catalyses the reaction oxaloacetate + GTP = phosphoenolpyruvate + GDP + CO2. It participates in carbohydrate biosynthesis; gluconeogenesis. Its function is as follows. Catalyzes the conversion of oxaloacetate (OAA) to phosphoenolpyruvate (PEP), the rate-limiting step in the metabolic pathway that produces glucose from lactate and other precursors derived from the citric acid cycle. This Renibacterium salmoninarum (strain ATCC 33209 / DSM 20767 / JCM 11484 / NBRC 15589 / NCIMB 2235) protein is Phosphoenolpyruvate carboxykinase [GTP].